Here is a 282-residue protein sequence, read N- to C-terminus: MSHSNLLLGAHTSAAGGVYRALLEGKKIGATTIQFFTSNQKQWKGRQFTTNDIELWQSTLKETNLTHLMSHDSYLINLGCPNQENLLKSRQAFQEEVIRCTQLGINYLNFHPGASLGEDVQKCLDSIVESLLLVRPFIQGNLRLLLEATAGQGTSVGHKFEQLAYIINGVKDELPIGVCIDTCHIFVAGYDIRTSSAWDFTLKGFDRIIGLPYLYAFHINDSSKDLGSRVDRHQPLGEGKIGWESFEFLMKDSRTRHLPKYLETPGGVDLWEKEIQKLKEFA.

9 residues coordinate Zn(2+): His71, His111, Glu147, Asp181, His184, His218, Asp231, His233, and Glu263.

The protein belongs to the AP endonuclease 2 family. Zn(2+) serves as cofactor.

The catalysed reaction is Endonucleolytic cleavage to 5'-phosphooligonucleotide end-products.. Its function is as follows. Endonuclease IV plays a role in DNA repair. It cleaves phosphodiester bonds at apurinic or apyrimidinic (AP) sites, generating a 3'-hydroxyl group and a 5'-terminal sugar phosphate. The chain is Probable endonuclease 4 from Protochlamydia amoebophila (strain UWE25).